Consider the following 92-residue polypeptide: Small ribosomal subunit protein uS19c (92 aa).

This sequence belongs to the universal ribosomal protein uS19 family.

Its subcellular location is the plastid. It is found in the chloroplast. Its function is as follows. Protein S19 forms a complex with S13 that binds strongly to the 16S ribosomal RNA. This chain is Small ribosomal subunit protein uS19c (rps19), found in Marchantia polymorpha (Common liverwort).